A 219-amino-acid chain; its full sequence is 7-cyano-7-deazaguanine synthase (219 aa).

10-20 (FSGGQDSTTCL) serves as a coordination point for ATP. Zn(2+) contacts are provided by cysteine 188, cysteine 197, cysteine 200, and cysteine 203.

This sequence belongs to the QueC family. In terms of assembly, homodimer. Zn(2+) is required as a cofactor.

The catalysed reaction is 7-carboxy-7-deazaguanine + NH4(+) + ATP = 7-cyano-7-deazaguanine + ADP + phosphate + H2O + H(+). The protein operates within purine metabolism; 7-cyano-7-deazaguanine biosynthesis. In terms of biological role, catalyzes the ATP-dependent conversion of 7-carboxy-7-deazaguanine (CDG) to 7-cyano-7-deazaguanine (preQ(0)). This chain is 7-cyano-7-deazaguanine synthase, found in Clostridium botulinum (strain ATCC 19397 / Type A).